We begin with the raw amino-acid sequence, 259 residues long: Ribonuclease HII (259 aa).

The RNase H type-2 domain occupies 70–258 (TLIAGIDEVG…VKSLVLGKKE (189 aa)). A divalent metal cation is bound by residues Asp76, Glu77, and Asp168.

Belongs to the RNase HII family. It depends on Mn(2+) as a cofactor. Requires Mg(2+) as cofactor.

It is found in the cytoplasm. The catalysed reaction is Endonucleolytic cleavage to 5'-phosphomonoester.. Endonuclease that specifically degrades the RNA of RNA-DNA hybrids. The chain is Ribonuclease HII from Streptococcus pneumoniae serotype 19F (strain G54).